A 163-amino-acid polypeptide reads, in one-letter code: Bacterial microcompartment assembly protein PduM (163 aa).

Belongs to the PduM family. Interacts with shell protein PduK.

Its subcellular location is the bacterial microcompartment. It functions in the pathway polyol metabolism; 1,2-propanediol degradation. Its function is as follows. Plays an essential role in assembly and/or stability of the bacterial microcompartment (BMC) dedicated to 1,2-propanediol (1,2-PD) degradation. Overexpression impairs BMC formation. The 1,2-PD-specific bacterial microcompartment (BMC) concentrates low levels of 1,2-PD catabolic enzymes, concentrates volatile reaction intermediates thus enhancing pathway flux and keeps the level of toxic, mutagenic propionaldehyde low. The chain is Bacterial microcompartment assembly protein PduM from Salmonella typhimurium (strain LT2 / SGSC1412 / ATCC 700720).